A 336-amino-acid polypeptide reads, in one-letter code: Tetraacyldisaccharide 4'-kinase (336 aa).

60-67 (TVGGTGKT) lines the ATP pocket.

It belongs to the LpxK family.

The catalysed reaction is a lipid A disaccharide + ATP = a lipid IVA + ADP + H(+). The protein operates within glycolipid biosynthesis; lipid IV(A) biosynthesis; lipid IV(A) from (3R)-3-hydroxytetradecanoyl-[acyl-carrier-protein] and UDP-N-acetyl-alpha-D-glucosamine: step 6/6. Transfers the gamma-phosphate of ATP to the 4'-position of a tetraacyldisaccharide 1-phosphate intermediate (termed DS-1-P) to form tetraacyldisaccharide 1,4'-bis-phosphate (lipid IVA). The protein is Tetraacyldisaccharide 4'-kinase of Pseudomonas fluorescens (strain SBW25).